We begin with the raw amino-acid sequence, 345 residues long: Dihydroorotase (345 aa).

His14 and His16 together coordinate Zn(2+). Substrate-binding positions include 16 to 18 and Asn42; that span reads HLR. Residues Lys102, His139, and His177 each coordinate Zn(2+). Residue Lys102 is modified to N6-carboxylysine. His139 is a binding site for substrate. Residue Leu222 participates in substrate binding. Residue Asp250 coordinates Zn(2+). Residue Asp250 is part of the active site. Residues His254 and Ala266 each coordinate substrate.

It belongs to the metallo-dependent hydrolases superfamily. DHOase family. Class II DHOase subfamily. In terms of assembly, homodimer. Requires Zn(2+) as cofactor.

It carries out the reaction (S)-dihydroorotate + H2O = N-carbamoyl-L-aspartate + H(+). It functions in the pathway pyrimidine metabolism; UMP biosynthesis via de novo pathway; (S)-dihydroorotate from bicarbonate: step 3/3. In terms of biological role, catalyzes the reversible cyclization of carbamoyl aspartate to dihydroorotate. The chain is Dihydroorotase from Nitrosomonas eutropha (strain DSM 101675 / C91 / Nm57).